Here is a 215-residue protein sequence, read N- to C-terminus: Transcription elongation factor A protein-like 4 (215 aa).

Met1 is subject to N-acetylmethionine. The segment at 1 to 133 is disordered; that stretch reads MEKLYSENEG…RKAKRKTNKG (133 aa). Residues Ser6, Ser88, and Ser102 each carry the phosphoserine modification. The span at 25–102 shows a compositional bias: basic and acidic residues; it reads QDERKPEVTC…KPEIEGKPES (78 aa).

The protein belongs to the TFS-II family. TFA subfamily.

Its subcellular location is the nucleus. Functionally, may be involved in transcriptional regulation. The sequence is that of Transcription elongation factor A protein-like 4 (TCEAL4) from Homo sapiens (Human).